The following is a 137-amino-acid chain: NADH dehydrogenase [ubiquinone] 1 beta subcomplex subunit 7 (137 aa).

A lipid anchor (N-myristoyl glycine) is attached at Gly-2. One can recognise a CHCH domain in the interval 56 to 98 (RDYCAHYLIRLLKCKRDSFPNFLACKQERHDWDYCEHRDYVMR). Residues 59 to 69 (CAHYLIRLLKC) carry the Cx9C motif 1 motif. Cystine bridges form between Cys-59-Cys-90 and Cys-69-Cys-80. At Ser-73 the chain carries Phosphoserine. The Cx9C motif 2 motif lies at 80-90 (CKQERHDWDYC). Residues 113–137 (KRREKKAAELAKGQGPGEVDPKVAL) form a disordered region.

This sequence belongs to the complex I NDUFB7 subunit family. In terms of assembly, complex I is composed of 45 different subunits.

Its subcellular location is the mitochondrion inner membrane. The protein resides in the mitochondrion intermembrane space. Accessory subunit of the mitochondrial membrane respiratory chain NADH dehydrogenase (Complex I), that is believed not to be involved in catalysis. Complex I functions in the transfer of electrons from NADH to the respiratory chain. The immediate electron acceptor for the enzyme is believed to be ubiquinone. The chain is NADH dehydrogenase [ubiquinone] 1 beta subcomplex subunit 7 (NDUFB7) from Gorilla gorilla gorilla (Western lowland gorilla).